We begin with the raw amino-acid sequence, 80 residues long: Conotoxin Cl10.1 (80 aa).

The signal sequence occupies residues 1 to 20; it reads MTTLGMTMLVLLLLLPLATC. Residues 21–36 constitute a propeptide that is removed on maturation; the sequence is LGDGERSPWDSLLRAL.

Contains 4 disulfide bonds. As to expression, expressed by the venom duct.

Its subcellular location is the secreted. The chain is Conotoxin Cl10.1 from Californiconus californicus (California cone).